The chain runs to 270 residues: NAD kinase (270 aa).

Catalysis depends on Asp49, which acts as the Proton acceptor. Residues 49–50 (DG), Arg54, 126–127 (NE), Arg152, Asp154, 165–170 (TAYNKS), Ala189, and Gln227 each bind NAD(+).

Belongs to the NAD kinase family. A divalent metal cation is required as a cofactor.

Its subcellular location is the cytoplasm. The catalysed reaction is NAD(+) + ATP = ADP + NADP(+) + H(+). Its function is as follows. Involved in the regulation of the intracellular balance of NAD and NADP, and is a key enzyme in the biosynthesis of NADP. Catalyzes specifically the phosphorylation on 2'-hydroxyl of the adenosine moiety of NAD to yield NADP. The sequence is that of NAD kinase from Lactococcus lactis subsp. cremoris (strain SK11).